A 144-amino-acid chain; its full sequence is Cell division protein SepF (144 aa).

Over residues 14–31 the composition is skewed to acidic residues; sequence EDDEMNEVPYTESEEQQE. A disordered region spans residues 14-41; sequence EDDEMNEVPYTESEEQQEEIPQTQKNER.

Belongs to the SepF family. In terms of assembly, homodimer. Interacts with FtsZ.

The protein resides in the cytoplasm. Functionally, cell division protein that is part of the divisome complex and is recruited early to the Z-ring. Probably stimulates Z-ring formation, perhaps through the cross-linking of FtsZ protofilaments. Its function overlaps with FtsA. This is Cell division protein SepF from Lactobacillus johnsonii (strain CNCM I-12250 / La1 / NCC 533).